Here is a 341-residue protein sequence, read N- to C-terminus: Adenine deaminase (341 aa).

Positions 24, 26, and 204 each coordinate Zn(2+). The active-site Proton donor is the glutamate 207. Position 285 (aspartate 285) interacts with Zn(2+). Aspartate 286 serves as a coordination point for substrate.

This sequence belongs to the metallo-dependent hydrolases superfamily. Adenosine and AMP deaminases family. Adenine deaminase type 2 subfamily. It depends on Zn(2+) as a cofactor.

It carries out the reaction adenine + H2O + H(+) = hypoxanthine + NH4(+). Its function is as follows. Catalyzes the hydrolytic deamination of adenine to hypoxanthine. Plays an important role in the purine salvage pathway and in nitrogen catabolism. The protein is Adenine deaminase of Sphingopyxis alaskensis (strain DSM 13593 / LMG 18877 / RB2256) (Sphingomonas alaskensis).